The sequence spans 479 residues: Putative F-box/LRR-repeat protein At1g56400 (479 aa).

In terms of domain architecture, F-box spans 12–60; the sequence is QDRLSNLPDVLLIMIISCLSFKECIRTSVLAKRWRYLCRETRNISFKET. 7 LRR repeats span residues 99–129, 139–167, 186–211, 228–254, 287–312, 342–367, and 419–446; these read YFSI…VLDF, CASR…KIYS, IGWI…SINY, VFES…KYSG, RTKL…SVCP, LHVM…TFDI, and LKFL…ELYM.

In Arabidopsis thaliana (Mouse-ear cress), this protein is Putative F-box/LRR-repeat protein At1g56400.